Consider the following 299-residue polypeptide: HTH-type transcriptional regulator ArgP (299 aa).

The HTH lysR-type domain occupies 4-60 (LDYKLLLALDAVMQEQNFERAAQRLHITQSAISQRIKQLEQQFAEPLLIRSQPLQAT). The H-T-H motif DNA-binding region spans 21–40 (FERAAQRLHITQSAISQRIK).

This sequence belongs to the LysR transcriptional regulatory family. As to quaternary structure, homodimer.

Its function is as follows. Controls the transcription of genes involved in arginine and lysine metabolism. The sequence is that of HTH-type transcriptional regulator ArgP from Aeromonas salmonicida.